The primary structure comprises 490 residues: Phosphoglucosamine mutase (490 aa).

Residue serine 139 is the Phosphoserine intermediate of the active site. Mg(2+) is bound by residues serine 139, aspartate 279, aspartate 281, and aspartate 283. At serine 139 the chain carries Phosphoserine.

This sequence belongs to the phosphohexose mutase family. It depends on Mg(2+) as a cofactor. Post-translationally, activated by phosphorylation.

It catalyses the reaction alpha-D-glucosamine 1-phosphate = D-glucosamine 6-phosphate. In terms of biological role, catalyzes the conversion of glucosamine-6-phosphate to glucosamine-1-phosphate. The protein is Phosphoglucosamine mutase of Nostoc sp. (strain PCC 7120 / SAG 25.82 / UTEX 2576).